We begin with the raw amino-acid sequence, 442 residues long: ATP-dependent protease ATPase subunit HslU (442 aa).

Residues I18, G60–E65, D255, E320, and R392 contribute to the ATP site.

Belongs to the ClpX chaperone family. HslU subfamily. In terms of assembly, a double ring-shaped homohexamer of HslV is capped on each side by a ring-shaped HslU homohexamer. The assembly of the HslU/HslV complex is dependent on binding of ATP.

It is found in the cytoplasm. In terms of biological role, ATPase subunit of a proteasome-like degradation complex; this subunit has chaperone activity. The binding of ATP and its subsequent hydrolysis by HslU are essential for unfolding of protein substrates subsequently hydrolyzed by HslV. HslU recognizes the N-terminal part of its protein substrates and unfolds these before they are guided to HslV for hydrolysis. This is ATP-dependent protease ATPase subunit HslU from Shewanella sp. (strain W3-18-1).